We begin with the raw amino-acid sequence, 83 residues long: Cytochrome c oxidase subunit 7A2, mitochondrial (83 aa).

The transit peptide at 1–23 directs the protein to the mitochondrion; it reads MLRNVLALRQIAQRTISTTSRRH. Residues 24–48 are Mitochondrial matrix-facing; the sequence is FENKVPEKQKLFQEDNGMPVHLKGG. K33 bears the N6-acetyllysine mark. Residues 49 to 77 traverse the membrane as a helical segment; that stretch reads TSDALLYRATMLLTVGGTAYAIYMLAMAA. Residues 78–83 lie on the Mitochondrial intermembrane side of the membrane; the sequence is FPKKQN.

It belongs to the cytochrome c oxidase VIIa family. Component of the cytochrome c oxidase (complex IV, CIV), a multisubunit enzyme composed of 14 subunits. The complex is composed of a catalytic core of 3 subunits MT-CO1, MT-CO2 and MT-CO3, encoded in the mitochondrial DNA, and 11 supernumerary subunits COX4I, COX5A, COX5B, COX6A, COX6B, COX6C, COX7A, COX7B, COX7C, COX8 and NDUFA4, which are encoded in the nuclear genome. The complex exists as a monomer or a dimer and forms supercomplexes (SCs) in the inner mitochondrial membrane with NADH-ubiquinone oxidoreductase (complex I, CI) and ubiquinol-cytochrome c oxidoreductase (cytochrome b-c1 complex, complex III, CIII), resulting in different assemblies (supercomplex SCI(1)III(2)IV(1) and megacomplex MCI(2)III(2)IV(2)). Interacts with PET100.

Its subcellular location is the mitochondrion inner membrane. It functions in the pathway energy metabolism; oxidative phosphorylation. Its function is as follows. Component of the cytochrome c oxidase, the last enzyme in the mitochondrial electron transport chain which drives oxidative phosphorylation. The respiratory chain contains 3 multisubunit complexes succinate dehydrogenase (complex II, CII), ubiquinol-cytochrome c oxidoreductase (cytochrome b-c1 complex, complex III, CIII) and cytochrome c oxidase (complex IV, CIV), that cooperate to transfer electrons derived from NADH and succinate to molecular oxygen, creating an electrochemical gradient over the inner membrane that drives transmembrane transport and the ATP synthase. Cytochrome c oxidase is the component of the respiratory chain that catalyzes the reduction of oxygen to water. Electrons originating from reduced cytochrome c in the intermembrane space (IMS) are transferred via the dinuclear copper A center (CU(A)) of subunit 2 and heme A of subunit 1 to the active site in subunit 1, a binuclear center (BNC) formed by heme A3 and copper B (CU(B)). The BNC reduces molecular oxygen to 2 water molecules using 4 electrons from cytochrome c in the IMS and 4 protons from the mitochondrial matrix. This Rattus norvegicus (Rat) protein is Cytochrome c oxidase subunit 7A2, mitochondrial (Cox7a2).